The chain runs to 195 residues: PE-PGRS family protein PE_PGRS61 (195 aa).

The protein belongs to the mycobacterial PE family. PGRS subfamily. Interacts with human TLR2.

It is found in the secreted. Its subcellular location is the cell wall. The protein resides in the cell surface. Binding of Ca(2+) to PE_PGRS61 induces conformational changes and increases affinity for TLR2. Functionally, mediates Ca(2+)-dependent up-regulation of the anti-inflammatory cytokine IL-10. The protein is PE-PGRS family protein PE_PGRS61 of Mycobacterium tuberculosis (strain ATCC 25618 / H37Rv).